Reading from the N-terminus, the 298-residue chain is MIKQSTLKKSINIKGFGLHSGKPVKLTLNPAPVNSGIIYRRIDISPPVEFISNVNLIKNTNLCTSLENKNGVNISTVEHLSAAICGLGIDNIIIEITSSEIPIMDGSSWPFVDIIINSSGIKTLEHDKKFIYIKKIVRVEKEDKWIEVTPSNKFTLDFSIDFDHPVISSTSQNFFFTFSVNSFINQISKARTFGFLRDIKYLQSNKLALGGNCNCAIVIGNKRILNKEGLRFSNEFIRHKILDAIGDFFVSGYNIVGAFKAFKPGHNMHYMLLKKIFRNKNTWEFSTMKNNHSYVNNF.

Zn(2+) is bound by residues H79, H239, and D243. Residue H266 is the Proton donor of the active site.

Belongs to the LpxC family. Zn(2+) is required as a cofactor.

It catalyses the reaction a UDP-3-O-[(3R)-3-hydroxyacyl]-N-acetyl-alpha-D-glucosamine + H2O = a UDP-3-O-[(3R)-3-hydroxyacyl]-alpha-D-glucosamine + acetate. It participates in glycolipid biosynthesis; lipid IV(A) biosynthesis; lipid IV(A) from (3R)-3-hydroxytetradecanoyl-[acyl-carrier-protein] and UDP-N-acetyl-alpha-D-glucosamine: step 2/6. Its function is as follows. Catalyzes the hydrolysis of UDP-3-O-myristoyl-N-acetylglucosamine to form UDP-3-O-myristoylglucosamine and acetate, the committed step in lipid A biosynthesis. This Wigglesworthia glossinidia brevipalpis protein is UDP-3-O-acyl-N-acetylglucosamine deacetylase.